The sequence spans 420 residues: MVEKRVQPLARDAMAYVLAGGRGSRLKELTDRRAKPAVYFGGKARIIDFALSNALNSGIRRIGVATQYKAHSLIRHMQRGWNFFRPERNESFDILPASQRVSETQWYEGTADAVYQNIDIIEDYGVEYMVILAGDHVYKMDYEWMLQQHVDSGADVTIGCLEVPRMEAVGFGVMHVNEKDEIIAFVEKPADPPPIPDKPDFALASMGIYVFHTKFLLDALRRDAADPNSSRDFGKDIIPYIVKNGKAVAHRFAKSCVRSDFEHEPYWRDVGTIDAYWQANIDLTAIVPELDIYDKSWPIWTYAEITPPAKFVHDDEDRRGSATSSVVSGDCIISGASLNNSLLFTGVRANSFSKLEGAVILPNVKIGRRAQLKNVVIDHGVVIPEGLVVGEDPKLDAKRFRRTESGICLITQPMIDKLDI.

Alpha-D-glucose 1-phosphate is bound by residues Tyr107, Gly172, Glu187–Lys188, and Ser205.

Belongs to the bacterial/plant glucose-1-phosphate adenylyltransferase family. In terms of assembly, homotetramer.

It catalyses the reaction alpha-D-glucose 1-phosphate + ATP + H(+) = ADP-alpha-D-glucose + diphosphate. It functions in the pathway glycan biosynthesis; glycogen biosynthesis. Functionally, involved in the biosynthesis of ADP-glucose, a building block required for the elongation reactions to produce glycogen. Catalyzes the reaction between ATP and alpha-D-glucose 1-phosphate (G1P) to produce pyrophosphate and ADP-Glc. The sequence is that of Glucose-1-phosphate adenylyltransferase from Rhizobium leguminosarum bv. trifolii (strain WSM2304).